We begin with the raw amino-acid sequence, 216 residues long: Adenylate kinase (216 aa).

Gly10–Thr15 is an ATP binding site. Positions Ser30–Val59 are NMP. AMP-binding positions include Thr31, Arg36, Glu57–Val59, Gly85–Arg88, and Gln92. Residues Gly126 to Asp164 are LID. Arg127 provides a ligand contact to ATP. 2 residues coordinate Zn(2+): Cys130 and Cys133. Thr136–Tyr137 serves as a coordination point for ATP. Zn(2+)-binding residues include Cys150 and Cys153. AMP contacts are provided by Arg161 and Arg172. Arg200 contributes to the ATP binding site.

It belongs to the adenylate kinase family. Monomer.

The protein resides in the cytoplasm. The enzyme catalyses AMP + ATP = 2 ADP. It functions in the pathway purine metabolism; AMP biosynthesis via salvage pathway; AMP from ADP: step 1/1. Its function is as follows. Catalyzes the reversible transfer of the terminal phosphate group between ATP and AMP. Plays an important role in cellular energy homeostasis and in adenine nucleotide metabolism. The chain is Adenylate kinase from Enterococcus faecalis (strain ATCC 700802 / V583).